The primary structure comprises 249 residues: Bis(5'-nucleosyl)-tetraphosphatase PrpE [asymmetrical] (249 aa).

The protein belongs to the PrpE family. Ni(2+) serves as cofactor.

The catalysed reaction is P(1),P(4)-bis(5'-guanosyl) tetraphosphate + H2O = GMP + GTP + 2 H(+). Asymmetrically hydrolyzes Ap4p to yield AMP and ATP. This is Bis(5'-nucleosyl)-tetraphosphatase PrpE [asymmetrical] from Bacillus velezensis (strain DSM 23117 / BGSC 10A6 / LMG 26770 / FZB42) (Bacillus amyloliquefaciens subsp. plantarum).